We begin with the raw amino-acid sequence, 835 residues long: Involucrin (835 aa).

Positions 1–15 (MSQQHTLPVTLSPAL) are enriched in polar residues. Disordered stretches follow at residues 1 to 133 (MSQQ…LDQR), 150 to 206 (EQLL…LEVP), 221 to 285 (GQLK…QLKH), 321 to 342 (GQLKHLDQQEGQLELPEQQEGQ), 381 to 428 (GQLK…VPEE), 446 to 486 (LDQQ…LEVP), 501 to 548 (GQLK…VPEE), and 566 to 809 (LDQQ…QPAL). A compositionally biased stretch (low complexity) spans 76-91 (EQQQQEPQEQELQQQH). Basic and acidic residues-rich tracts occupy residues 92 to 115 (WEQHEEHQKAENPEQQLKQEKAQR) and 159 to 168 (QEQHLKHLEQ). Residues 169 to 181 (QEGQLELPEQQEG) show a composition bias toward low complexity. 2 stretches are compositionally biased toward basic and acidic residues: residues 182–198 (QLKHLEQQEGQLKHLEQ) and 222–268 (QLKH…HLDQ). Composition is skewed to low complexity over residues 269–281 (QEGQLELPEQQEG), 329–341 (QEGQLELPEQQEG), and 389–401 (QEGQLELPEQQEG). Basic and acidic residues-rich tracts occupy residues 402-421 (QLKHLEQQEGQLKHLEHQEG) and 446-464 (LDQQEGQLKHLDQQEKQLE). A compositionally biased stretch (low complexity) spans 509–521 (QEGQLELPEQQEG). Composition is skewed to basic and acidic residues over residues 522 to 541 (QLKHLEQQEGQLKHLEHQEG), 566 to 584 (LDQQEGQLKHLDQQEKQLE), and 594 to 620 (KHLEQQEGQLEHLEGQEGQLEHLEHQE). A compositionally biased stretch (low complexity) spans 655-668 (HLVQQEGQLEQQEG). Residues 669-685 (QVEHLEEQVGQLKHLEE) show a composition bias toward basic and acidic residues. Low complexity predominate over residues 693–710 (LEQQQGQLEVPEQQVGQP). Basic and acidic residues-rich tracts occupy residues 711–721 (KHLEQEEKQLE), 729–738 (QLKHLEKQEA), and 751–775 (KHLEQQEKQLEHPEQKDGQLKHLEQ). A compositionally biased stretch (polar residues) spans 776 to 789 (QEGQLKNLEQQKGQ).

It belongs to the involucrin family. In terms of assembly, directly or indirectly cross-linked to cornifelin (CNFN). In terms of processing, substrate of transglutaminase. Specific glutamines or lysines are cross-linked to keratins, desmoplakin and to inter involucrin molecules. In terms of tissue distribution, keratinocytes of epidermis and other stratified squamous epithelia.

The protein localises to the cytoplasm. In terms of biological role, part of the insoluble cornified cell envelope (CE) of stratified squamous epithelia. The sequence is that of Involucrin (IVL) from Pongo pygmaeus (Bornean orangutan).